A 258-amino-acid chain; its full sequence is Flagellar L-ring protein (258 aa).

Positions 1–15 (MKRIVCLALFLSMTG) are cleaved as a signal peptide. Residue Cys-16 is the site of N-palmitoyl cysteine attachment. The S-diacylglycerol cysteine moiety is linked to residue Cys-16.

Belongs to the FlgH family. In terms of assembly, the basal body constitutes a major portion of the flagellar organelle and consists of four rings (L,P,S, and M) mounted on a central rod.

Its subcellular location is the cell outer membrane. It localises to the bacterial flagellum basal body. Assembles around the rod to form the L-ring and probably protects the motor/basal body from shearing forces during rotation. In Vibrio atlanticus (strain LGP32) (Vibrio splendidus (strain Mel32)), this protein is Flagellar L-ring protein.